Reading from the N-terminus, the 155-residue chain is Cathelicidin-1 (155 aa).

An N-terminal signal peptide occupies residues 1–29 (METPRASLSLGRWSLWLLLLGLALPSASA). Pyrrolidone carboxylic acid is present on glutamine 30. A propeptide spanning residues 30 to 143 (QALSYREAVL…KQPWAPPQAA (114 aa)) is cleaved from the precursor. 3 cysteine pairs are disulfide-bonded: cysteine 85–cysteine 96, cysteine 107–cysteine 124, and cysteine 146–cysteine 154.

This sequence belongs to the cathelicidin family. As to expression, large granules of neutrophils.

The protein localises to the secreted. Its function is as follows. Potent microbicidal activity; active against S.aureus and E.coli. This is Cathelicidin-1 (CATHL1) from Bos taurus (Bovine).